Consider the following 217-residue polypeptide: TLD domain-containing protein 2 (217 aa).

Residues 1 to 48 (MKSLRWRYTRLPSQVEDALSGEEDKEEEEEKEEETTPAPTPVPEHPMV) form a disordered region. The span at 19–35 (LSGEEDKEEEEEKEEET) shows a compositional bias: acidic residues. A TLDc domain is found at 56–217 (QVLGASEMSQ…ISELEAWVLS (162 aa)).

Belongs to the OXR1 family.

The protein is TLD domain-containing protein 2 (TLDC2) of Bos taurus (Bovine).